The following is a 112-amino-acid chain: UPF0235 protein RHE_CH03912 (112 aa).

Belongs to the UPF0235 family.

The chain is UPF0235 protein RHE_CH03912 from Rhizobium etli (strain ATCC 51251 / DSM 11541 / JCM 21823 / NBRC 15573 / CFN 42).